We begin with the raw amino-acid sequence, 329 residues long: MEGASAECVRAEPFHRVTPLLESWALSQVAGMPVFLKYENVQIAGSFKIRGIGHFCQQMAKRGCRHLVCSSGGNAGIAAAYSAQKLGIPVTIVLPESTSKQVVRRLEGEGAEVQLTGKVWDEANVRAQELATRDGWVNVSPFDHPLIWEGNASLVRELKESLRTPPGAVVLAVGGGGLLAGVVAGLLEVGWQHVPIVAMETRGAHSFNAALLAGRLVTLPDITSVARSLGAKTVAARTLECAKECEVLSEVVEDREAVRAVQRFLDDERMLVEPACGAALAAVYSGILGRLQTEGRLSPALDSVVVIVCGGNNISSQQLQELKTQLNCS.

Position 1 is an N-acetylmethionine (methionine 1). At lysine 48 the chain carries N6-(pyridoxal phosphate)lysine.

It belongs to the serine/threonine dehydratase family. As to quaternary structure, monomer. Homodimer. Requires pyridoxal 5'-phosphate as cofactor.

The enzyme catalyses L-serine = pyruvate + NH4(+). The catalysed reaction is L-threonine = 2-oxobutanoate + NH4(+). It catalyses the reaction L-glutamate = D-glutamate. Its activity is regulated as follows. Serine dehydratase activity is inhibited by manganese chloride, ferrous chloride, cobalt chloride, cupric chloride, nickel chloride and zinc chloride. Glutamate racemase activity is inhibited by manganese chloride, ferrous chloride, cupric chloride and zinc chloride. Functionally, catalyzes the pyridoxal-phosphate-dependent dehydrative deamination of L-threonine and L-serine to ammonia and alpha-ketobutyrate and pyruvate, respectively. Also exhibits racemase activity towards L-glutamate and D-glutamate. This Rattus norvegicus (Rat) protein is Serine dehydratase-like (Sdsl).